Reading from the N-terminus, the 493-residue chain is Glutamyl-tRNA(Gln) amidotransferase subunit A (493 aa).

Catalysis depends on charge relay system residues K79 and S159. S183 (acyl-ester intermediate) is an active-site residue.

The protein belongs to the amidase family. GatA subfamily. As to quaternary structure, heterotrimer of A, B and C subunits.

The enzyme catalyses L-glutamyl-tRNA(Gln) + L-glutamine + ATP + H2O = L-glutaminyl-tRNA(Gln) + L-glutamate + ADP + phosphate + H(+). Its function is as follows. Allows the formation of correctly charged Gln-tRNA(Gln) through the transamidation of misacylated Glu-tRNA(Gln) in organisms which lack glutaminyl-tRNA synthetase. The reaction takes place in the presence of glutamine and ATP through an activated gamma-phospho-Glu-tRNA(Gln). This chain is Glutamyl-tRNA(Gln) amidotransferase subunit A, found in Sinorhizobium fredii (strain NBRC 101917 / NGR234).